The sequence spans 131 residues: (R)-mandelonitrile lyase (131 aa).

A Cupin type-2 domain is found at 42–104 (VTFEPGARTA…WHGAAPTTAM (63 aa)). Residues His-53, His-55, Gln-59, His-94, and His-96 each coordinate Mn(2+).

It belongs to the cupin domain-containing hydroxynitrile lyase family. The cofactor is Mn(2+).

The enzyme catalyses (R)-mandelonitrile = benzaldehyde + hydrogen cyanide. In terms of biological role, hydroxynitrile lyase which catalyzes mandelonitrile formation from benzaldehyde and hydrogen cyanide with high stereoselectivity in presence of manganese. This Granulicella tundricola (strain ATCC BAA-1859 / DSM 23138 / MP5ACTX9) protein is (R)-mandelonitrile lyase.